Here is a 373-residue protein sequence, read N- to C-terminus: Enoyl-[acyl-carrier-protein] reductase, mitochondrial (373 aa).

The N-terminal 53 residues, 1 to 53 (MWVCSTLWRVRTPARQWRGLLPASGCHGPAASSYSASAEPARVRALVYGHHGD), are a transit peptide targeting the mitochondrion. N6-acetyllysine; alternate is present on Lys-61. N6-succinyllysine; alternate is present on Lys-61. Residue Tyr-94 is the Proton donor of the active site. NADP(+)-binding positions include Asn-167, 193–196 (NSGV), and 216–218 (RDR). An N6-acetyllysine; alternate mark is found at Lys-252 and Lys-267. N6-succinyllysine; alternate is present on residues Lys-252 and Lys-267. NADP(+) contacts are provided by residues 285 to 288 (YGGM) and 310 to 312 (FWL). Lys-316 carries the N6-succinyllysine modification. Lys-368 is a binding site for NADP(+).

Belongs to the zinc-containing alcohol dehydrogenase family. Quinone oxidoreductase subfamily. As to quaternary structure, homodimer. Isoform 2 interacts with PPARA in the nucleus and increases its activity. As to expression, highly expressed in skeletal and heart muscle. Expressed at lower level in placenta, liver, kidney and pancreas. Weakly or not expressed in lung.

Its subcellular location is the mitochondrion. It localises to the cytoplasm. The protein resides in the nucleus. It carries out the reaction a 2,3-saturated acyl-[ACP] + NADP(+) = a (2E)-enoyl-[ACP] + NADPH + H(+). The catalysed reaction is (2E)-butenoyl-[ACP] + NADPH + H(+) = butanoyl-[ACP] + NADP(+). The enzyme catalyses (2E)-hexenoyl-[ACP] + NADPH + H(+) = hexanoyl-[ACP] + NADP(+). It catalyses the reaction (2E)-octenoyl-[ACP] + NADPH + H(+) = octanoyl-[ACP] + NADP(+). It carries out the reaction (2E)-decenoyl-[ACP] + NADPH + H(+) = decanoyl-[ACP] + NADP(+). The catalysed reaction is (2E)-dodecenoyl-[ACP] + NADPH + H(+) = dodecanoyl-[ACP] + NADP(+). The enzyme catalyses (2E)-tetradecenoyl-[ACP] + NADPH + H(+) = tetradecanoyl-[ACP] + NADP(+). It catalyses the reaction (2E)-hexadecenoyl-[ACP] + NADPH + H(+) = hexadecanoyl-[ACP] + NADP(+). In terms of biological role, catalyzes the NADPH-dependent reduction of trans-2-enoyl thioesters in mitochondrial fatty acid synthesis (fatty acid synthesis type II). Fatty acid chain elongation in mitochondria uses acyl carrier protein (ACP) as an acyl group carrier, but the enzyme accepts both ACP and CoA thioesters as substrates in vitro. Displays a preference for medium-chain over short- and long-chain substrates. May provide the octanoyl chain used for lipoic acid biosynthesis, regulating protein lipoylation and mitochondrial respiratory activity particularly in Purkinje cells. Involved in iron homeostasis; affecting Fe-S cluster assembly and ceramide metabolism. Required for proper morphology and bioenergetic functions of mitochondria. Required for maintenance of neurons. This Homo sapiens (Human) protein is Enoyl-[acyl-carrier-protein] reductase, mitochondrial (MECR).